The chain runs to 421 residues: D-amino acid dehydrogenase (421 aa).

Val3 to Tyr17 provides a ligand contact to FAD.

The protein belongs to the DadA oxidoreductase family. The cofactor is FAD.

It carries out the reaction a D-alpha-amino acid + A + H2O = a 2-oxocarboxylate + AH2 + NH4(+). The protein operates within amino-acid degradation; D-alanine degradation; NH(3) and pyruvate from D-alanine: step 1/1. Oxidative deamination of D-amino acids. This is D-amino acid dehydrogenase from Acinetobacter baumannii (strain AB307-0294).